The following is a 156-amino-acid chain: Ribosome maturation factor RimP (156 aa).

The protein belongs to the RimP family.

It localises to the cytoplasm. Required for maturation of 30S ribosomal subunits. The sequence is that of Ribosome maturation factor RimP from Synechococcus sp. (strain JA-2-3B'a(2-13)) (Cyanobacteria bacterium Yellowstone B-Prime).